A 154-amino-acid polypeptide reads, in one-letter code: Ribosome maturation factor RimP (154 aa).

This sequence belongs to the RimP family.

It is found in the cytoplasm. Required for maturation of 30S ribosomal subunits. This chain is Ribosome maturation factor RimP, found in Thioalkalivibrio sulfidiphilus (strain HL-EbGR7).